A 266-amino-acid polypeptide reads, in one-letter code: MSQGFLTFPTIDPVLIQLGPLAIRWYGLMYLVGFLFAMWLANRRADKPNSGWTRDQVSDLLFAGFLGVVLGGRIGYVLFYNFGLFLDNPLYLFQVWTGGMSFHGGLLGVMTAMLWYGHRNKRTFFSVADFIAPLVPFGLGMGRMGNFMNGELWGRVTDMPWAMVFPTGGPFPRHPSQLYEAFLEGFVLLIILNIFIRKPRPAGAVSGLFLIGYGSFRFIIEYFREPDAQLGLFGDWISMGQILSSPMIIFGALLMLWAYKAQPKTA.

The next 7 membrane-spanning stretches (helical) occupy residues 21–41 (LAIR…MWLA), 60–80 (LLFA…VLFY), 95–115 (VWTG…AMLW), 124–144 (FFSV…MGRM), 176–196 (SQLY…NIFI), 203–223 (GAVS…IEYF), and 236–256 (WISM…LLML). Arg-143 provides a ligand contact to a 1,2-diacyl-sn-glycero-3-phospho-(1'-sn-glycerol).

It belongs to the Lgt family.

Its subcellular location is the cell inner membrane. It carries out the reaction L-cysteinyl-[prolipoprotein] + a 1,2-diacyl-sn-glycero-3-phospho-(1'-sn-glycerol) = an S-1,2-diacyl-sn-glyceryl-L-cysteinyl-[prolipoprotein] + sn-glycerol 1-phosphate + H(+). Its pathway is protein modification; lipoprotein biosynthesis (diacylglyceryl transfer). In terms of biological role, catalyzes the transfer of the diacylglyceryl group from phosphatidylglycerol to the sulfhydryl group of the N-terminal cysteine of a prolipoprotein, the first step in the formation of mature lipoproteins. This is Phosphatidylglycerol--prolipoprotein diacylglyceryl transferase from Photobacterium profundum (strain SS9).